Here is a 238-residue protein sequence, read N- to C-terminus: Dolichyldiphosphatase 1 (238 aa).

The next 4 membrane-spanning stretches (helical) occupy residues 33–53, 100–120, 130–150, and 162–182; these read LAYL…LIIF, PSSH…FLYL, FLDL…AFLV, and WSQV…WFIF.

Belongs to the dolichyldiphosphatase family.

It is found in the endoplasmic reticulum membrane. It catalyses the reaction a di-trans,poly-cis-dolichyl diphosphate + H2O = a di-trans,poly-cis-dolichyl phosphate + phosphate + H(+). Its pathway is protein modification; protein glycosylation. Required for efficient N-glycosylation. Necessary for maintaining optimal levels of dolichol-linked oligosaccharides. Hydrolyzes dolichyl pyrophosphate at a very high rate and dolichyl monophosphate at a much lower rate. Does not act on phosphatidate. In Callithrix jacchus (White-tufted-ear marmoset), this protein is Dolichyldiphosphatase 1 (DOLPP1).